We begin with the raw amino-acid sequence, 286 residues long: UPF0173 metal-dependent hydrolase RALTA_A1748 (286 aa).

The protein belongs to the UPF0173 family.

The chain is UPF0173 metal-dependent hydrolase RALTA_A1748 from Cupriavidus taiwanensis (strain DSM 17343 / BCRC 17206 / CCUG 44338 / CIP 107171 / LMG 19424 / R1) (Ralstonia taiwanensis (strain LMG 19424)).